The chain runs to 367 residues: Aspartate-semialdehyde dehydrogenase (367 aa).

Residues 10–13, 37–38, and glutamine 73 contribute to the NADP(+) site; these read RGMV and TS. Arginine 102 is a phosphate binding site. The Acyl-thioester intermediate role is filled by cysteine 135. Cysteine 135 bears the S-cysteinyl cysteine; in inhibited form mark. Position 162 (glutamine 162) interacts with substrate. Residues 165 to 166 and proline 193 each bind NADP(+); that span reads SG. Residue glutamate 241 participates in substrate binding. Residue lysine 244 coordinates phosphate. Position 267 (arginine 267) interacts with substrate. Residue histidine 274 is the Proton acceptor of the active site. An NADP(+)-binding site is contributed by glutamine 350.

Belongs to the aspartate-semialdehyde dehydrogenase family. In terms of assembly, homodimer.

It carries out the reaction L-aspartate 4-semialdehyde + phosphate + NADP(+) = 4-phospho-L-aspartate + NADPH + H(+). The protein operates within amino-acid biosynthesis; L-lysine biosynthesis via DAP pathway; (S)-tetrahydrodipicolinate from L-aspartate: step 2/4. Its pathway is amino-acid biosynthesis; L-methionine biosynthesis via de novo pathway; L-homoserine from L-aspartate: step 2/3. It participates in amino-acid biosynthesis; L-threonine biosynthesis; L-threonine from L-aspartate: step 2/5. Its function is as follows. Catalyzes the NADPH-dependent formation of L-aspartate-semialdehyde (L-ASA) by the reductive dephosphorylation of L-aspartyl-4-phosphate. This chain is Aspartate-semialdehyde dehydrogenase, found in Escherichia coli O6:H1 (strain CFT073 / ATCC 700928 / UPEC).